We begin with the raw amino-acid sequence, 156 residues long: Regulatory protein RecX (156 aa).

The protein belongs to the RecX family.

The protein localises to the cytoplasm. In terms of biological role, modulates RecA activity. The chain is Regulatory protein RecX from Pseudomonas putida (strain ATCC 47054 / DSM 6125 / CFBP 8728 / NCIMB 11950 / KT2440).